The following is a 247-amino-acid chain: Cell division protein ZapD (247 aa).

Belongs to the ZapD family. Interacts with FtsZ.

It localises to the cytoplasm. Cell division factor that enhances FtsZ-ring assembly. Directly interacts with FtsZ and promotes bundling of FtsZ protofilaments, with a reduction in FtsZ GTPase activity. The sequence is that of Cell division protein ZapD from Shigella boydii serotype 4 (strain Sb227).